Consider the following 306-residue polypeptide: Homeobox protein HMX3 (306 aa).

A disordered region spans residues 95 to 181 (HTPRTEVPDK…DKKPCRKKKT (87 aa)). 2 stretches are compositionally biased toward basic and acidic residues: residues 117–143 (GERDSPDPIHPLKTELGAKESESKSPE) and 153–174 (EEGKKDDSGEDWKKREDSPDKK). The segment at residues 178–237 (KKKTRTVFSRSQVFQLESTFDMKRYLSSSERAGLAASLHLTETQVKIWFQNRRNKWKRQL) is a DNA-binding region (homeobox).

Belongs to the HMX homeobox family.

It localises to the nucleus. Its function is as follows. Transcription factor involved in specification of neuronal cell types and which is required for inner ear and hypothalamus development. Binds to the 5'-CAAGTG-3' core sequence. May act as a stage-specific inhibitor of anf1 in the anterior neural plate during the development. The polypeptide is Homeobox protein HMX3 (hmx3) (Xenopus laevis (African clawed frog)).